A 757-amino-acid polypeptide reads, in one-letter code: Polyribonucleotide nucleotidyltransferase (757 aa).

D525 and D531 together coordinate Mg(2+). The KH domain maps to 591 to 650 (PRVISVNIPVDKIGELIGPKGKTINAIQDETGADISIEEDGTVYIGAVDGPSADAARAQV). Positions 662–734 (GESFLGTVVK…DRGKLSLAPV (73 aa)) constitute an S1 motif domain. A disordered region spans residues 737–757 (ETADQEGRDAASHGSEAPAEG).

The protein belongs to the polyribonucleotide nucleotidyltransferase family. The cofactor is Mg(2+).

The protein localises to the cytoplasm. The enzyme catalyses RNA(n+1) + phosphate = RNA(n) + a ribonucleoside 5'-diphosphate. Involved in mRNA degradation. Catalyzes the phosphorolysis of single-stranded polyribonucleotides processively in the 3'- to 5'-direction. This is Polyribonucleotide nucleotidyltransferase from Clavibacter michiganensis subsp. michiganensis (strain NCPPB 382).